Here is a 141-residue protein sequence, read N- to C-terminus: Putative pre-16S rRNA nuclease (141 aa).

This sequence belongs to the YqgF nuclease family.

It localises to the cytoplasm. In terms of biological role, could be a nuclease involved in processing of the 5'-end of pre-16S rRNA. The polypeptide is Putative pre-16S rRNA nuclease (Amoebophilus asiaticus (strain 5a2)).